The primary structure comprises 444 residues: Transcription activator AFTR-2 (444 aa).

Positions 16 to 43 (CDFCTQSKLRCNKNKPSCRRCTLQQQPC) form a DNA-binding region, zn(2)-C6 fungal-type. The interval 49 to 88 (RRTGRPPKHPRKANDCQEANGQHGDQDPVTSTPGGSYQQQ) is disordered. Residues 50 to 59 (RTGRPPKHPR) show a composition bias toward basic residues. Over residues 76–88 (PVTSTPGGSYQQQ) the composition is skewed to polar residues.

It is found in the nucleus. Functionally, transcription factor that regulates the expression of the gene clusters that mediate the biosynthesis of the host-selective toxins (HSTs) AF-toxins responsible for Alternaria black spot of strawberry disease by the strawberry pathotype. On cellular level, AF-toxins affect plasma membrane of susceptible cells and cause a sudden increase in loss of K(+) after a few minutes of toxin treatment. This chain is Transcription activator AFTR-2, found in Alternaria alternata (Alternaria rot fungus).